A 293-amino-acid polypeptide reads, in one-letter code: Aspartate carbamoyltransferase catalytic subunit (293 aa).

The carbamoyl phosphate site is built by Arg-50 and Thr-51. Residue Lys-78 participates in L-aspartate binding. 3 residues coordinate carbamoyl phosphate: Arg-100, His-127, and Gln-130. Arg-160 and Arg-210 together coordinate L-aspartate. Positions 253 and 254 each coordinate carbamoyl phosphate.

It belongs to the aspartate/ornithine carbamoyltransferase superfamily. ATCase family. In terms of assembly, heterododecamer (2C3:3R2) of six catalytic PyrB chains organized as two trimers (C3), and six regulatory PyrI chains organized as three dimers (R2).

The enzyme catalyses carbamoyl phosphate + L-aspartate = N-carbamoyl-L-aspartate + phosphate + H(+). The protein operates within pyrimidine metabolism; UMP biosynthesis via de novo pathway; (S)-dihydroorotate from bicarbonate: step 2/3. Catalyzes the condensation of carbamoyl phosphate and aspartate to form carbamoyl aspartate and inorganic phosphate, the committed step in the de novo pyrimidine nucleotide biosynthesis pathway. The chain is Aspartate carbamoyltransferase catalytic subunit from Staphylococcus epidermidis (strain ATCC 35984 / DSM 28319 / BCRC 17069 / CCUG 31568 / BM 3577 / RP62A).